Consider the following 261-residue polypeptide: X-box-binding protein 1 (261 aa).

Topologically, residues 1–185 (MVVVAAAPNP…VQAQLSPLQN (185 aa)) are cytoplasmic. The segment at 44 to 93 (RGASPEAASGGLPQARKRQRLTHLSPEEKALRRKLKNRVAAQTARDRKKA) is disordered. 2 positions are modified to phosphoserine: Ser-47 and Ser-68. The bZIP domain maps to 70-133 (EEKALRRKLK…HGLVVENQEL (64 aa)). Positions 72-94 (KALRRKLKNRVAAQTARDRKKAR) are basic motif. The interval 75-92 (RRKLKNRVAAQTARDRKK) is nuclear localization signal (NLS); in isoforms 1 and isoform 2. The leucine-zipper stretch occupies residues 98–133 (LEQQVVDLEEENQKLLLENQLLREKTHGLVVENQEL). The helical; Signal-anchor for type II membrane protein transmembrane segment at 186-203 (ISPWILAVLTLQIQSLIS) threads the bilayer. The Lumenal segment spans residues 204-261 (CWAFWTTWTQSCSSNALPQSLPAWRSSQRSTQKDPVPYQPPFLCQWGRHQPSWKPLMN). Residues 235-261 (QKDPVPYQPPFLCQWGRHQPSWKPLMN) are necessary for the translational pausing of its own mRNA.

The protein belongs to the bZIP family. Isoform 2 interacts with SIRT1. Isoform 2 interacts with PIK3R1 and PIK3R2; the interactions are direct and induce translocation of XBP1 isoform 2 into the nucleus and the unfolded protein response (UPR) XBP1-dependent target genes activation in a ER stress- and/or insulin-dependent but PI3K-independent manner. Isoform 2 interacts with FOXO1; the interaction is direct and leads to FOXO1 ubiquitination and degradation via the proteasome pathway in hepatocytes. Isoform 1 interacts with HM13. Isoform 1 interacts with RNF139; the interaction induces ubiquitination and degradation of isoform 1. Isoform 1 interacts (via luminal domain) with DERL1; the interaction obviates the need for ectodomain shedding prior HM13/SPP-mediated XBP1 isoform 1 cleavage. Isoform 1 interacts with isoform 2; the interaction sequesters isoform 2 from the nucleus and enhances isoform 2 degradation in the cytoplasm. Isoform 1 interacts with HDAC3 and AKT1; the interactions occur in endothelial cell (EC) under disturbed flow. Isoform 1 interacts with the oncoprotein FOS. Isoform 2 interacts with ATF6; the interaction occurs in a ER stress-dependent manner and is required for DNA binding to the unfolded protein response element (UPRE). Isoform 2 interacts with PIK3R1; the interaction is direct and induces translocation of XBP1 isoform 2 into the nucleus and the unfolded protein response (UPR) XBP1-dependent target genes activation in a ER stress- and/or insulin-dependent but PI3K-independent manner. Acetylated by EP300; acetylation positively regulates the transcriptional activity of XBP1 isoform 2. Isoform 2 is deacetylated by SIRT1; deacetylation negatively regulates the transcriptional activity of XBP1 isoform 2. Post-translationally, ubiquitinated, leading to proteasome-mediated degradation in response to ER stress. In terms of processing, X-box-binding protein 1, cytoplasmic form and luminal form are produced by intramembrane proteolytic cleavage of ER membrane-anchored isoform 1 triggered by HM13/SPP in a DERL1-RNF139-dependent and VCP/p97-independent manner. X-box-binding protein 1, luminal form is ubiquitinated leading to proteasomal degradation. Expressed in plasma cells in rheumatoid synovium. Over-expressed in primary breast cancer and metastatic breast cancer cells. Isoform 1 and isoform 2 are expressed at higher level in proliferating as compared to confluent quiescent endothelial cells.

It is found in the endoplasmic reticulum. It localises to the nucleus. The protein localises to the cytoplasm. The protein resides in the endoplasmic reticulum membrane. Its subcellular location is the membrane. Functionally, functions as a transcription factor during endoplasmic reticulum (ER) stress by regulating the unfolded protein response (UPR). Required for cardiac myogenesis and hepatogenesis during embryonic development, and the development of secretory tissues such as exocrine pancreas and salivary gland. Involved in terminal differentiation of B lymphocytes to plasma cells and production of immunoglobulins. Modulates the cellular response to ER stress in a PIK3R-dependent manner. Binds to the cis-acting X box present in the promoter regions of major histocompatibility complex class II genes. Involved in VEGF-induced endothelial cell (EC) proliferation and retinal blood vessel formation during embryonic development but also for angiogenesis in adult tissues under ischemic conditions. Also functions as a major regulator of the UPR in obesity-induced insulin resistance and type 2 diabetes for the management of obesity and diabetes prevention. Its function is as follows. Plays a role in the unconventional cytoplasmic splicing processing of its own mRNA triggered by the endoplasmic reticulum (ER) transmembrane endoribonuclease ERN1: upon ER stress, the emerging XBP1 polypeptide chain, as part of a mRNA-ribosome-nascent chain (R-RNC) complex, cotranslationally recruits its own unprocessed mRNA through transient docking to the ER membrane and translational pausing, therefore facilitating efficient IRE1-mediated XBP1 mRNA isoform 2 production. In endothelial cells (EC), associated with KDR, promotes IRE1-mediated XBP1 mRNA isoform 2 productions in a vascular endothelial growth factor (VEGF)-dependent manner, leading to EC proliferation and angiogenesis. Functions as a negative feed-back regulator of the potent transcription factor XBP1 isoform 2 protein levels through proteasome-mediated degradation, thus preventing the constitutive activation of the ER stress response signaling pathway. Inhibits the transactivation activity of XBP1 isoform 2 in myeloma cells. Acts as a weak transcriptional factor. Together with HDAC3, contributes to the activation of NFE2L2-mediated HMOX1 transcription factor gene expression in a PI(3)K/mTORC2/Akt-dependent signaling pathway leading to EC survival under disturbed flow/oxidative stress. Binds to the ER stress response element (ERSE) upon ER stress. Binds to the consensus 5'-GATGACGTG[TG]N(3)[AT]T-3' sequence related to cAMP responsive element (CRE)-like sequences. Binds the Tax-responsive element (TRE) present in the long terminal repeat (LTR) of T-cell leukemia virus type 1 (HTLV-I) and to the TPA response elements (TRE). Associates preferentially to the HDAC3 gene promoter region in a static flow-dependent manner. Binds to the CDH5/VE-cadherin gene promoter region. In terms of biological role, functions as a stress-inducible potent transcriptional activator during endoplasmic reticulum (ER) stress by inducing unfolded protein response (UPR) target genes via binding to the UPR element (UPRE). Up-regulates target genes encoding ER chaperones and ER-associated degradation (ERAD) components to enhance the capacity of productive folding and degradation mechanism, respectively, in order to maintain the homeostasis of the ER under ER stress. Plays a role in the production of immunoglobulins and interleukin-6 in the presence of stimuli required for plasma cell differentiation. Induces phospholipid biosynthesis and ER expansion. Contributes to the VEGF-induced endothelial cell (EC) growth and proliferation in a Akt/GSK-dependent and/or -independent signaling pathway, respectively, leading to beta-catenin nuclear translocation and E2F2 gene expression. Promotes umbilical vein EC apoptosis and atherosclerotisis development in a caspase-dependent signaling pathway, and contributes to VEGF-induced EC proliferation and angiogenesis in adult tissues under ischemic conditions. Involved in the regulation of endostatin-induced autophagy in EC through BECN1 transcriptional activation. Plays a role as an oncogene by promoting tumor progression: stimulates zinc finger protein SNAI1 transcription to induce epithelial-to-mesenchymal (EMT) transition, cell migration and invasion of breast cancer cells. Involved in adipocyte differentiation by regulating lipogenic gene expression during lactation. Plays a role in the survival of both dopaminergic neurons of the substantia nigra pars compacta (SNpc), by maintaining protein homeostasis and of myeloma cells. Increases insulin sensitivity in the liver as a response to a high carbohydrate diet, resulting in improved glucose tolerance. Also improves glucose homeostasis in an ER stress- and/or insulin-independent manner through both binding and proteasome-induced degradation of the transcription factor FOXO1, hence resulting in suppression of gluconeogenic genes expression and in a reduction of blood glucose levels. Controls the induction of de novo fatty acid synthesis in hepatocytes by regulating the expression of a subset of lipogenic genes in an ER stress- and UPR-independent manner. Associates preferentially to the HDAC3 gene promoter region in a disturbed flow-dependent manner. Binds to the BECN1 gene promoter region. Binds to the CDH5/VE-cadherin gene promoter region. Binds to the ER stress response element (ERSE) upon ER stress. Binds to the 5'-CCACG-3' motif in the PPARG promoter. This is X-box-binding protein 1 from Homo sapiens (Human).